The sequence spans 219 residues: Octanoyltransferase (219 aa).

One can recognise a BPL/LPL catalytic domain in the interval glutamate 32–lysine 207. Substrate contacts are provided by residues arginine 71–histidine 78, serine 138–glycine 140, and glycine 151–alanine 153. The active-site Acyl-thioester intermediate is cysteine 169.

This sequence belongs to the LipB family.

It localises to the cytoplasm. It carries out the reaction octanoyl-[ACP] + L-lysyl-[protein] = N(6)-octanoyl-L-lysyl-[protein] + holo-[ACP] + H(+). Its pathway is protein modification; protein lipoylation via endogenous pathway; protein N(6)-(lipoyl)lysine from octanoyl-[acyl-carrier-protein]: step 1/2. Its function is as follows. Catalyzes the transfer of endogenously produced octanoic acid from octanoyl-acyl-carrier-protein onto the lipoyl domains of lipoate-dependent enzymes. Lipoyl-ACP can also act as a substrate although octanoyl-ACP is likely to be the physiological substrate. The sequence is that of Octanoyltransferase from Shewanella pealeana (strain ATCC 700345 / ANG-SQ1).